A 241-amino-acid polypeptide reads, in one-letter code: 2,3-bisphosphoglycerate-dependent phosphoglycerate mutase (241 aa).

The Tele-phosphohistidine intermediate role is filled by histidine 12. Residues 24–25, arginine 61, 117–120, and lysine 128 each bind substrate; these read SG and ERYY. Glutamate 117 acts as the Proton donor/acceptor in catalysis.

Belongs to the phosphoglycerate mutase family. BPG-dependent PGAM subfamily.

It carries out the reaction (2R)-2-phosphoglycerate = (2R)-3-phosphoglycerate. It participates in carbohydrate degradation; glycolysis; pyruvate from D-glyceraldehyde 3-phosphate: step 3/5. Its function is as follows. Catalyzes the interconversion of 2-phosphoglycerate and 3-phosphoglycerate. In Methanosarcina mazei (strain ATCC BAA-159 / DSM 3647 / Goe1 / Go1 / JCM 11833 / OCM 88) (Methanosarcina frisia), this protein is 2,3-bisphosphoglycerate-dependent phosphoglycerate mutase.